The chain runs to 471 residues: MLLPVIMAGGTGSRLWPMSRELYPKQFLRLFGQNSMLQETITRLSGLEVHEPMVICNEEHRFLVAEQLRQLNKLSSNIILEPVGRNTAPAIALAALQATRHGDDPLMLVLAADHIINNQPVFHDAIRVAEQYADEGHLVTFGIVPNAPETGYGYIQRGVAVTDSAHTPYQVARFVEKPDRERAGAYLASGEYYWNSGMFMFRAKKYLSELAKFRPDILEACQAAVNAADNGSDFISIPHDIFCECPDESVDYAVMEKTADAVVVGLDADWSDVGSWSALWEVSPKDGQGNVLSGDAWVHNSENCYINSDEKLVAAIGVENLVIVSTKDAVLVMNRERSQDVKKAVEFLKQNQRTEYKRHREIYRPWGRCDVVVQTPRFNVNRITVKPGGAFSMQMHHHRAEHWVILAGTGQVTVNGKQFLLSENQSTFIPIGAEHCLENPGCIPLEVLEIQSGSYLGEDDIIRIKDQYGRC.

The protein belongs to the mannose-6-phosphate isomerase type 2 family.

The catalysed reaction is alpha-D-mannose 1-phosphate + GTP + H(+) = GDP-alpha-D-mannose + diphosphate. Its pathway is nucleotide-sugar biosynthesis; GDP-alpha-D-mannose biosynthesis; GDP-alpha-D-mannose from alpha-D-mannose 1-phosphate (GTP route): step 1/1. It participates in bacterial outer membrane biogenesis; LPS O-antigen biosynthesis. Its function is as follows. Involved in GDP-mannose biosynthesis which serves as the activated sugar nucleotide precursor for mannose residues in cell surface polysaccharides. This enzyme participates in synthesis of the LPS O9 antigen. This Escherichia coli protein is Mannose-1-phosphate guanylyltransferase (manC).